Reading from the N-terminus, the 1132-residue chain is Error-prone DNA polymerase (1132 aa).

It belongs to the DNA polymerase type-C family. DnaE2 subfamily.

It is found in the cytoplasm. The enzyme catalyses DNA(n) + a 2'-deoxyribonucleoside 5'-triphosphate = DNA(n+1) + diphosphate. DNA polymerase involved in damage-induced mutagenesis and translesion synthesis (TLS). It is not the major replicative DNA polymerase. The protein is Error-prone DNA polymerase of Anaeromyxobacter dehalogenans (strain 2CP-C).